Here is a 224-residue protein sequence, read N- to C-terminus: MIFAPSFSLIKNILLVSFLISHSFAAKTLTSSSNDDTLARSAAADADMAFFMEFLNDFDTAFPQYTSYMMQNHLTLPQPVADYYYHMVDLASTADLQSDIAQSFPFTQFQTFITAFPWYTSLLNKASATTIYLPQHFITGETEATMTNSSYASQKNSVSNSVPFSTANAGQSMISMANEENSTTALISASNSSSTSRTSQSQNGAHAKSLYFPMALFGIFAVAL.

An N-terminal signal peptide occupies residues 1-25; it reads MIFAPSFSLIKNILLVSFLISHSFA. N-linked (GlcNAc...) asparagine glycans are attached at residues N148, N181, and N191. N203 carries the GPI-anchor amidated asparagine lipid modification. Residues 204 to 224 constitute a propeptide, removed in mature form; the sequence is GAHAKSLYFPMALFGIFAVAL.

This sequence belongs to the SRP1/TIP1 family. The GPI-anchor is attached to the protein in the endoplasmic reticulum and serves to target the protein to the cell surface. There, the glucosamine-inositol phospholipid moiety is cleaved off and the GPI-modified mannoprotein is covalently attached via its lipidless GPI glycan remnant to the 1,6-beta-glucan of the outer cell wall layer.

The protein localises to the secreted. It localises to the cell wall. The protein resides in the membrane. MATalpha-specific protein that interferes with a-factor, the pheromone secreted by MATa cells. Contributes to mating efficiency. Acts to bind and sequester a-factor rather than to degrade it, and promotes the efficient mating of MATalpha cells by keeping the a-factor concentration at the plasma membrane within the narrow range needed for accurate pheromone gradient detection. This is A-factor barrier protein 1 from Saccharomyces cerevisiae (strain ATCC 204508 / S288c) (Baker's yeast).